The primary structure comprises 257 residues: Spindlin-2C (257 aa).

Positions 1-47 (MKTPHKKGAAKEQMGEGVGHHIGSTTIKKKKASQKRQRSRSSSRRSI) are disordered. The span at 27-43 (IKKKKASQKRQRSRSSS) shows a compositional bias: basic residues. 3 tudor-like domain regions span residues 48 to 97 (VGCR…LELH), 127 to 176 (IGKA…YQLL), and 208 to 253 (IGKH…YDLV). Histone H3K4me3 and H3R8me2a binding regions lie at residues Glu-136 and 244–246 (DFH).

It belongs to the SPIN/STSY family. In terms of assembly, interacts with C11orf84/SPINDOC.

The protein resides in the nucleus. Functionally, may be involved in the regulation of cell cycle progression. Exhibits H3K4me3-binding activity. This is Spindlin-2C (Spin2c) from Mus musculus (Mouse).